Reading from the N-terminus, the 168-residue chain is uncharacterized protein (168 aa).

2 helical membrane passes run 4–24 (IIALLFFFLIAFGYSLSPEEE) and 94–114 (IMVGIFAGQIALVAAVIGFAW).

This sequence to A.aeolicus aq_1446.

It localises to the cell membrane. This is an uncharacterized protein from Aquifex aeolicus (strain VF5).